The primary structure comprises 889 residues: Translation initiation factor IF-2 (889 aa).

The disordered stretch occupies residues 158-296 (LKEKQEKRRQ…KYKSDELQSQ (139 aa)). A compositionally biased stretch (low complexity) spans 209 to 228 (AAATPATSTAPATTSTTAAT). Basic and acidic residues predominate over residues 238–270 (VKPEEKGEKKKKPTKQDAWKDEPVKRREPKARG). Residues 391–560 (PRAPVVTVMG…LLQAEVLELK (170 aa)) enclose the tr-type G domain. Residues 400–407 (GHVDHGKT) form a G1 region. A GTP-binding site is contributed by 400–407 (GHVDHGKT). The tract at residues 425-429 (GITQH) is G2. A G3 region spans residues 446 to 449 (DTPG). GTP contacts are provided by residues 446–450 (DTPGH) and 500–503 (NKMD). The interval 500-503 (NKMD) is G4. Residues 536–538 (SAK) are G5.

Belongs to the TRAFAC class translation factor GTPase superfamily. Classic translation factor GTPase family. IF-2 subfamily.

The protein resides in the cytoplasm. Functionally, one of the essential components for the initiation of protein synthesis. Protects formylmethionyl-tRNA from spontaneous hydrolysis and promotes its binding to the 30S ribosomal subunits. Also involved in the hydrolysis of GTP during the formation of the 70S ribosomal complex. The protein is Translation initiation factor IF-2 of Nitrosomonas europaea (strain ATCC 19718 / CIP 103999 / KCTC 2705 / NBRC 14298).